We begin with the raw amino-acid sequence, 296 residues long: Ribonuclease MRP protein subunit POP4 (296 aa).

Disordered stretches follow at residues 29-74 (LLQQ…VDPK) and 148-173 (SASG…KRLK). The span at 36–56 (KNEKDKKGTSDVDVSMKESHQ) shows a compositional bias: basic and acidic residues. Over residues 57–66 (ADSLPTPSKT) the composition is skewed to polar residues. The Nuclear localization signal signature appears at 160-167 (SKRSKSRM). The segment covering 163 to 173 (SKSRMSMKRLK) has biased composition (basic residues).

Belongs to the eukaryotic/archaeal RNase P protein component 1 family. Component of nuclear RNase MRP complexes. Several subunits of RNase P are also part of the RNase MRP complex. RNase MRP consists of a catalytic RNA moiety and several protein subunits.

The protein resides in the nucleus. In terms of biological role, component of the MRP ribonuclease complex, which cleaves pre-rRNA sequences. Required for rRNA maturation, including 5.8S rRNA processing. Seems not involved in tRNA maturation. This is Ribonuclease MRP protein subunit POP4 from Arabidopsis thaliana (Mouse-ear cress).